Consider the following 307-residue polypeptide: Protoheme IX farnesyltransferase (307 aa).

8 consecutive transmembrane segments (helical) span residues 32-52 (VVELLLVTTVPTMILAARGIP), 54-74 (LWLVLATVVGGYMSAGSAGAF), 105-125 (LVFAWALGVASVLVLGFFTNW), 126-146 (LAAGLSVAAILIYVVFYTLIL), 169-189 (WAVVTNSVGWAPVILFGVIFL), 222-242 (VVGLQVVLYAWAMVACSLLLI), 244-264 (VARMGVLYTAVALVAGGWFLY), and 287-307 (GSIAYLTLIFLAVAIDPLLPF).

Belongs to the UbiA prenyltransferase family. Protoheme IX farnesyltransferase subfamily.

It localises to the cell membrane. The enzyme catalyses heme b + (2E,6E)-farnesyl diphosphate + H2O = Fe(II)-heme o + diphosphate. The protein operates within porphyrin-containing compound metabolism; heme O biosynthesis; heme O from protoheme: step 1/1. Its function is as follows. Converts heme B (protoheme IX) to heme O by substitution of the vinyl group on carbon 2 of heme B porphyrin ring with a hydroxyethyl farnesyl side group. The polypeptide is Protoheme IX farnesyltransferase (Leifsonia xyli subsp. xyli (strain CTCB07)).